A 156-amino-acid polypeptide reads, in one-letter code: Protein CROC-4 (156 aa).

The interval R46–G71 is disordered. A compositionally biased stretch (low complexity) spans T48 to S59.

In terms of tissue distribution, expressed throughout the brain in the thalamus, subthalamic nucleus, corpus callosum, hippocampus, substantia nigra, caudate nucleus, and amygdala.

Its subcellular location is the nucleus. In terms of biological role, may play a role in FOS signaling pathways involved in development and remodeling of neurons. Promotes transcription of the FOS promoter. This is Protein CROC-4 from Homo sapiens (Human).